A 421-amino-acid chain; its full sequence is Nucleotide exchange factor SIL1 (421 aa).

Positions 1 to 19 (MVRILPIILSALSSKLVAS) are cleaved as a signal peptide. 6 N-linked (GlcNAc...) asparagine glycosylation sites follow: Asn105, Asn181, Asn215, Asn233, Asn315, and Asn333. The short motif at 418–421 (RDEL) is the Prevents secretion from ER element.

The protein belongs to the SIL1 family. As to quaternary structure, interacts with KAR2. In terms of processing, N-glycosylated.

The protein localises to the endoplasmic reticulum lumen. Its function is as follows. Required for protein translocation and folding in the endoplasmic reticulum (ER). Functions as a nucleotide exchange factor for the ER lumenal chaperone KAR2. The sequence is that of Nucleotide exchange factor SIL1 (SIL1) from Saccharomyces cerevisiae (strain ATCC 204508 / S288c) (Baker's yeast).